Reading from the N-terminus, the 194-residue chain is Cytochrome b-245 light chain (194 aa).

Topologically, residues 2-7 are cytoplasmic; the sequence is GQIEWA. Residues 8-30 traverse the membrane as a helical segment; sequence MWANEQALASGLILVAGGIVATA. Topologically, residues 31 to 35 are extracellular; that stretch reads GRFTQ. Residues 36 to 53 form a helical membrane-spanning segment; it reads WYFGTYAIAAGVLVCLLE. The Cytoplasmic segment spans residues 54–69; sequence YPRGSRAKGSTLERCG. An intramembrane segment occupies 70 to 80; sequence QRYLTAVLKLL. Over 81 to 86 the chain is Cytoplasmic; the sequence is GPLSRN. The helical transmembrane segment at 87 to 104 threads the bilayer; sequence YYFRAALHLALSVPAGFL. Residue Leu-105 is a topological domain, extracellular. A helical transmembrane segment spans residues 106-126; sequence ATILGTVCLVIASIIYLLAAV. Topologically, residues 127 to 194 are cytoplasmic; it reads RGEQWTPIEP…NPIPVTDEVV (68 aa). The tract at residues 134–194 is disordered; the sequence is IEPRPKERPQ…NPIPVTDEVV (61 aa). A Phosphothreonine modification is found at Thr-147. Residue Lys-149 forms a Glycyl lysine isopeptide (Lys-Gly) (interchain with G-Cter in ubiquitin) linkage.

Belongs to the p22phox family. As to quaternary structure, component of the phagocyte NADPH oxidase core complex/cytochrome b558 complex, composed of CYBB (heavy chain (beta)) and CYBA (light chain (alpha)). Component of the phagocyte NADPH oxidase complex composed of an obligatory core heterodimer formed by the membrane proteins CYBA and CYBB and the cytosolic regulatory subunits NCF1/p47-phox, NCF2/p67-phox, NCF4/p40-phox and the small GTPase RAC1 or RAC2. Interacts with NCF1 (via SH3 domain). Interacts with SH3PXD2A. Interacts with DUOX1, DUOX2 and TPO. Interacts with NOX4; this interaction mediates superoxide generation. Interacts with calprotectin (S100A8/9). Interacts with GBP7. Interacts with NOXO1. Forms a heterodimer with NOX3 and is essential for activity and cell membrane localization of NOX3. Interacts with NOX1. In terms of processing, phosphorylation at Thr-147 enhances NADPH oxidase activity by promoting NCF1/p47-phox binding. Post-translationally, ubiquitinated at Lys-149 likely by RNF145.

Its subcellular location is the cell membrane. Subunit of NADPH oxidase complexes that is required for the NADPH oxidase activity that generates, in various cell types, superoxide from molecular oxygen utilizing NADPH as an electron donor. Subunit of the phagocyte NADPH oxidase complex that mediates the transfer of electrons from cytosolic NADPH to O2 to produce the superoxide anion (O2(-)). In the activated complex, electrons are first transferred from NADPH to flavin adenine dinucleotide (FAD) and subsequently transferred via two heme molecules to molecular oxygen, producing superoxide through an outer-sphere reaction. Activation of the NADPH oxidase complex is initiated by the assembly of cytosolic subunits of the NADPH oxidase complex with the core NADPH oxidase complex to form a complex at the plasma membrane or phagosomal membrane. This activation process is initiated by phosphorylation dependent binding of the cytosolic NCF1/p47-phox subunit to the C-terminus of CYBA/p22-phox. Aassociates with NOX3 to form a functional NADPH oxidase constitutively generating superoxide. The protein is Cytochrome b-245 light chain of Oryctolagus cuniculus (Rabbit).